A 158-amino-acid polypeptide reads, in one-letter code: MSLFDGKKVIIIGDRDGIPGPAIAECLKGTAAEVVYSATECFVUTAAGAMDLENQNRVKGFADQFGAENLVVLVGAAEAESAGLAAETVTAGDPTFAGPLAGVQLGLRVFHAVEPEFKDAVDSAVYDEQIGMMEMVLDVDSIIAEMKSIREQFGKFND.

Sec-44 is a catalytic residue. A non-standard amino acid (selenocysteine) is located at residue Sec-44.

The protein belongs to the GrdA family. As to quaternary structure, monomer. Component of the glycine, sarcosine and betaine reductase complexes, together with components B and C.

It carries out the reaction acetyl phosphate + [thioredoxin]-disulfide + NH4(+) + H2O = [thioredoxin]-dithiol + glycine + phosphate + H(+). It catalyses the reaction acetyl phosphate + methylamine + [thioredoxin]-disulfide + H2O = sarcosine + [thioredoxin]-dithiol + phosphate + H(+). The enzyme catalyses acetyl phosphate + trimethylamine + [thioredoxin]-disulfide + H2O = glycine betaine + [thioredoxin]-dithiol + phosphate + H(+). Its function is as follows. In the first step of glycine, betaine and sarcosine reductases, the substrate is bound to component PB via a Schiff base intermediate. Then the PB-activated substrate is nucleophilically attacked by the selenol anion of component PA to transform it to a carboxymethylated selenoether and the respective amine. By action of component PC, acetyl phosphate is formed, leaving component PA in its oxidized state. Finally component PA becomes reduced by the thioredoxin system to start a new catalytic cycle of reductive deamination. This chain is Glycine/sarcosine/betaine reductase complex component A1 (grdA1), found in Peptoclostridium acidaminophilum (Eubacterium acidaminophilum).